A 408-amino-acid polypeptide reads, in one-letter code: Metacaspase-1B (408 aa).

Residues 1 to 98 (MYHRHSAPPP…PPLEAQQFGN (98 aa)) are disordered. 2 stretches are compositionally biased toward pro residues: residues 24-49 (WPPP…FPPP) and 56-66 (SPYPTPPPHSP). Catalysis depends on residues His199 and Cys255.

The protein belongs to the peptidase C14B family.

Involved in cell death (apoptosis). Required for the apoptotic-like loss of membrane phospholipid asymmetry at stationary phase and facilitates growth under conditions of endoplasmic reticulum stress. This Aspergillus fumigatus (strain CBS 144.89 / FGSC A1163 / CEA10) (Neosartorya fumigata) protein is Metacaspase-1B (casB).